A 164-amino-acid chain; its full sequence is Small ribosomal subunit protein uS3m (164 aa).

Residues 1-23 (MLRSIQHVEALSSRQISTTSMLL) constitute a mitochondrion transit peptide.

It belongs to the universal ribosomal protein uS3 family. As to quaternary structure, component of the mitochondrial ribosome small subunit (28S) which comprises a 12S rRNA and about 30 distinct proteins.

It localises to the mitochondrion. The polypeptide is Small ribosomal subunit protein uS3m (mrps-24) (Caenorhabditis elegans).